Here is a 264-residue protein sequence, read N- to C-terminus: Thymidylate synthase 2 (264 aa).

Arg21 is a dUMP binding site. His51 provides a ligand contact to (6R)-5,10-methylene-5,6,7,8-tetrahydrofolate. 126 to 127 (RR) contributes to the dUMP binding site. The Nucleophile role is filled by Cys146. DUMP-binding positions include 166-169 (RSAD), Asn177, and 207-209 (HIY). Residue Asp169 coordinates (6R)-5,10-methylene-5,6,7,8-tetrahydrofolate. Ser263 is a (6R)-5,10-methylene-5,6,7,8-tetrahydrofolate binding site.

It belongs to the thymidylate synthase family. Bacterial-type ThyA subfamily. As to quaternary structure, homodimer.

It localises to the cytoplasm. It carries out the reaction dUMP + (6R)-5,10-methylene-5,6,7,8-tetrahydrofolate = 7,8-dihydrofolate + dTMP. It functions in the pathway pyrimidine metabolism; dTTP biosynthesis. Functionally, catalyzes the reductive methylation of 2'-deoxyuridine-5'-monophosphate (dUMP) to 2'-deoxythymidine-5'-monophosphate (dTMP) while utilizing 5,10-methylenetetrahydrofolate (mTHF) as the methyl donor and reductant in the reaction, yielding dihydrofolate (DHF) as a by-product. This enzymatic reaction provides an intracellular de novo source of dTMP, an essential precursor for DNA biosynthesis. The protein is Thymidylate synthase 2 of Bacillus subtilis (strain 168).